We begin with the raw amino-acid sequence, 940 residues long: Isoleucine--tRNA ligase (940 aa).

Residues Pro58 to His68 carry the 'HIGH' region motif. An L-isoleucyl-5'-AMP-binding site is contributed by Glu564. Residues Lys605–Ser609 carry the 'KMSKS' region motif. Lys608 provides a ligand contact to ATP. Residues Cys903, Cys906, Cys923, and Cys926 each contribute to the Zn(2+) site.

The protein belongs to the class-I aminoacyl-tRNA synthetase family. IleS type 1 subfamily. In terms of assembly, monomer. Requires Zn(2+) as cofactor.

It is found in the cytoplasm. The catalysed reaction is tRNA(Ile) + L-isoleucine + ATP = L-isoleucyl-tRNA(Ile) + AMP + diphosphate. Its function is as follows. Catalyzes the attachment of isoleucine to tRNA(Ile). As IleRS can inadvertently accommodate and process structurally similar amino acids such as valine, to avoid such errors it has two additional distinct tRNA(Ile)-dependent editing activities. One activity is designated as 'pretransfer' editing and involves the hydrolysis of activated Val-AMP. The other activity is designated 'posttransfer' editing and involves deacylation of mischarged Val-tRNA(Ile). This chain is Isoleucine--tRNA ligase, found in Shewanella sp. (strain MR-7).